The primary structure comprises 217 residues: Thiamine-phosphate synthase (217 aa).

Residues 42 to 46 and Asp-77 contribute to the 4-amino-2-methyl-5-(diphosphooxymethyl)pyrimidine site; that span reads QFRDK. Asp-78 and Asp-97 together coordinate Mg(2+). Ser-117 serves as a coordination point for 4-amino-2-methyl-5-(diphosphooxymethyl)pyrimidine. Position 144 to 146 (144 to 146) interacts with 2-[(2R,5Z)-2-carboxy-4-methylthiazol-5(2H)-ylidene]ethyl phosphate; it reads TIS. Residue Lys-147 participates in 4-amino-2-methyl-5-(diphosphooxymethyl)pyrimidine binding. 2-[(2R,5Z)-2-carboxy-4-methylthiazol-5(2H)-ylidene]ethyl phosphate contacts are provided by residues Gly-175 and 195-196; that span reads IT.

Belongs to the thiamine-phosphate synthase family. It depends on Mg(2+) as a cofactor.

It carries out the reaction 2-[(2R,5Z)-2-carboxy-4-methylthiazol-5(2H)-ylidene]ethyl phosphate + 4-amino-2-methyl-5-(diphosphooxymethyl)pyrimidine + 2 H(+) = thiamine phosphate + CO2 + diphosphate. The catalysed reaction is 2-(2-carboxy-4-methylthiazol-5-yl)ethyl phosphate + 4-amino-2-methyl-5-(diphosphooxymethyl)pyrimidine + 2 H(+) = thiamine phosphate + CO2 + diphosphate. It catalyses the reaction 4-methyl-5-(2-phosphooxyethyl)-thiazole + 4-amino-2-methyl-5-(diphosphooxymethyl)pyrimidine + H(+) = thiamine phosphate + diphosphate. Its pathway is cofactor biosynthesis; thiamine diphosphate biosynthesis; thiamine phosphate from 4-amino-2-methyl-5-diphosphomethylpyrimidine and 4-methyl-5-(2-phosphoethyl)-thiazole: step 1/1. Functionally, condenses 4-methyl-5-(beta-hydroxyethyl)thiazole monophosphate (THZ-P) and 2-methyl-4-amino-5-hydroxymethyl pyrimidine pyrophosphate (HMP-PP) to form thiamine monophosphate (TMP). The chain is Thiamine-phosphate synthase from Levilactobacillus brevis (strain ATCC 367 / BCRC 12310 / CIP 105137 / JCM 1170 / LMG 11437 / NCIMB 947 / NCTC 947) (Lactobacillus brevis).